We begin with the raw amino-acid sequence, 399 residues long: Lipid droplet-regulating VLDL assembly factor AUP1 (399 aa).

Over 1 to 21 (MEQPSLESMLELQRFPRNPFS) the chain is Cytoplasmic. An intramembrane segment occupies 22 to 42 (LVLLLLYFPFGLCLFLIRLFI). Residues 43 to 399 (GAHVFLVSCV…GEEEEEGARG (357 aa)) are Cytoplasmic-facing. The region spanning 284-326 (THIQMAQHVKEVLPQVPLSAIHRDLGHTGCVDTTITNFLEGRV) is the CUE domain. The interval 332–364 (EEETTGAAEGTSKSRVSRPLPQGFAKKPEDRHL) is disordered.

This sequence belongs to the AUP1 family.

It is found in the endoplasmic reticulum membrane. The protein resides in the lipid droplet. Its function is as follows. Plays a role in the translocation of terminally misfolded proteins from the endoplasmic reticulum lumen to the cytoplasm and their degradation by the proteasome. Plays a role in lipid droplet formation. Induces lipid droplet clustering. This chain is Lipid droplet-regulating VLDL assembly factor AUP1, found in Xenopus laevis (African clawed frog).